An 82-amino-acid polypeptide reads, in one-letter code: Small ribosomal subunit protein bS16 (82 aa).

Belongs to the bacterial ribosomal protein bS16 family.

In Microcystis aeruginosa (strain NIES-843 / IAM M-2473), this protein is Small ribosomal subunit protein bS16.